The primary structure comprises 235 residues: MPCKRCRPSVYSLSYIKRGKTRNYLYPIWSPYAYYLYCYKYRITLREKMLPRCYKSITYKEEEDLTLQPRSCLQCSESLVGLQEGKSTEQGNHDQLKELYSAGNLTVLATDPLLHQDPVQLDFHFRLTSQTSAHWHGLLCDRRLFLDIPYQALDQGNRESLTATLEYVEEKTNVDSVFVNFQNDRNDRGALLRAFSYMGFEVVRPDHPALPPLDNVIFMVYPLERDVGHLPSEPP.

Ser9 and Ser12 each carry phosphoserine.

This sequence belongs to the ODC antizyme family. Interacts with ODC1 and thereby sterically blocks ODC homodimerization. Interacts with AZIN2; this interaction disrupts the interaction between the antizyme and ODC1. Interacts with GGN. Testis specific.

The protein localises to the nucleus. It is found in the cytoplasm. Its function is as follows. Ornithine decarboxylase (ODC) antizyme protein that negatively regulates ODC activity and intracellular polyamine biosynthesis and uptake in response to increased intracellular polyamine levels. Binds to ODC monomers, inhibiting the assembly of the functional ODC homodimers. Does not target the ODC monomers for degradation, which allows a protein synthesis-independent restoration of ODC activity. Stabilizes AZIN2 by interfering with its ubiquitination. Involved in the translocation of AZNI2 from ER-Golgi intermediate compartment (ERGIC) to the cytosol. Probably plays a key role in spermatogenesis by regulating the intracellular concentration of polyamines in haploid germ cells. The polypeptide is Ornithine decarboxylase antizyme 3 (OAZ3) (Homo sapiens (Human)).